A 403-amino-acid chain; its full sequence is Phosphoglycerate kinase (403 aa).

Substrate is bound by residues 22–24 (DLN), Arg37, 60–63 (HLGR), Arg119, and Arg156. ATP-binding positions include Lys206, Gly302, Glu333, and 359–362 (GGDS).

Belongs to the phosphoglycerate kinase family. As to quaternary structure, monomer.

Its subcellular location is the cytoplasm. It catalyses the reaction (2R)-3-phosphoglycerate + ATP = (2R)-3-phospho-glyceroyl phosphate + ADP. Its pathway is carbohydrate degradation; glycolysis; pyruvate from D-glyceraldehyde 3-phosphate: step 2/5. The polypeptide is Phosphoglycerate kinase (Streptomyces griseus subsp. griseus (strain JCM 4626 / CBS 651.72 / NBRC 13350 / KCC S-0626 / ISP 5235)).